We begin with the raw amino-acid sequence, 79 residues long: Small ribosomal subunit protein uS17 (79 aa).

The protein belongs to the universal ribosomal protein uS17 family. As to quaternary structure, part of the 30S ribosomal subunit.

Functionally, one of the primary rRNA binding proteins, it binds specifically to the 5'-end of 16S ribosomal RNA. The polypeptide is Small ribosomal subunit protein uS17 (Rhizobium rhizogenes (strain K84 / ATCC BAA-868) (Agrobacterium radiobacter)).